Reading from the N-terminus, the 390-residue chain is Branched-chain-amino-acid aminotransferase (390 aa).

Residue K225 is modified to N6-(pyridoxal phosphate)lysine.

This sequence belongs to the class-IV pyridoxal-phosphate-dependent aminotransferase family. In terms of assembly, homodimer. Pyridoxal 5'-phosphate serves as cofactor.

The catalysed reaction is L-leucine + 2-oxoglutarate = 4-methyl-2-oxopentanoate + L-glutamate. It catalyses the reaction L-isoleucine + 2-oxoglutarate = (S)-3-methyl-2-oxopentanoate + L-glutamate. It carries out the reaction L-valine + 2-oxoglutarate = 3-methyl-2-oxobutanoate + L-glutamate. In terms of biological role, catalyzes the first reaction in the catabolism of the essential branched chain amino acids leucine, isoleucine, and valine. This chain is Branched-chain-amino-acid aminotransferase, found in Monosiga brevicollis (Choanoflagellate).